The chain runs to 1465 residues: DNA polymerase III PolC-type (1465 aa).

The Exonuclease domain maps to 427-583 (YVVFDVETTG…YDAEATGRLL (157 aa)).

Belongs to the DNA polymerase type-C family. PolC subfamily.

It is found in the cytoplasm. The catalysed reaction is DNA(n) + a 2'-deoxyribonucleoside 5'-triphosphate = DNA(n+1) + diphosphate. In terms of biological role, required for replicative DNA synthesis. This DNA polymerase also exhibits 3' to 5' exonuclease activity. The chain is DNA polymerase III PolC-type from Streptococcus pyogenes serotype M18 (strain MGAS8232).